A 359-amino-acid polypeptide reads, in one-letter code: Ribosomal RNA large subunit methyltransferase M (359 aa).

S-adenosyl-L-methionine is bound by residues serine 186, 219–222 (CPGG), aspartate 238, aspartate 258, and aspartate 275. Lysine 304 serves as the catalytic Proton acceptor.

It belongs to the class I-like SAM-binding methyltransferase superfamily. RNA methyltransferase RlmE family. RlmM subfamily. In terms of assembly, monomer.

The protein resides in the cytoplasm. It catalyses the reaction cytidine(2498) in 23S rRNA + S-adenosyl-L-methionine = 2'-O-methylcytidine(2498) in 23S rRNA + S-adenosyl-L-homocysteine + H(+). Its function is as follows. Catalyzes the 2'-O-methylation at nucleotide C2498 in 23S rRNA. The chain is Ribosomal RNA large subunit methyltransferase M from Vibrio vulnificus (strain YJ016).